Consider the following 385-residue polypeptide: V-type proton ATPase subunit C (385 aa).

Belongs to the V-ATPase C subunit family. In terms of assembly, V-ATPase is a heteromultimeric enzyme made up of two complexes: the ATP-hydrolytic V1 complex and the proton translocation V0 complex. The V1 complex consists of three catalytic AB heterodimers that form a heterohexamer, three peripheral stalks each consisting of EG heterodimers, one central rotor including subunits D and F, and the regulatory subunits C and H. The proton translocation complex V0 consists of the proton transport subunit a, a ring of proteolipid subunits c9c'', rotary subunit d, subunits e and f, and the accessory subunits vah-19/Ac45 and vah-20/PRR. Interacts with V-type proton ATPase subunits a1 unc-32, a2 vha-5 and a3 vha-6.

Its subcellular location is the cytoplasm. It localises to the membrane. Subunit of the V1 complex of vacuolar(H+)-ATPase (V-ATPase), a multisubunit enzyme composed of a peripheral complex (V1) that hydrolyzes ATP and a membrane integral complex (V0) that translocates protons. V-ATPase is responsible for acidifying and maintaining the pH of intracellular compartments and in some cell types, is targeted to the plasma membrane, where it is responsible for acidifying the extracellular environment. Subunit C is necessary for the assembly of the catalytic sector of the enzyme and is likely to have a specific function in its catalytic activity. Has roles in embryogenesis and ovulation. This is V-type proton ATPase subunit C from Caenorhabditis briggsae.